The primary structure comprises 396 residues: Succinyl-diaminopimelate desuccinylase (396 aa).

His74 contacts Zn(2+). Residue Asp76 is part of the active site. Asp107 serves as a coordination point for Zn(2+). The Proton acceptor role is filled by Glu142. Zn(2+) is bound by residues Glu143, Glu171, and His360.

The protein belongs to the peptidase M20A family. DapE subfamily. Homodimer. It depends on Zn(2+) as a cofactor. Requires Co(2+) as cofactor.

It catalyses the reaction N-succinyl-(2S,6S)-2,6-diaminopimelate + H2O = (2S,6S)-2,6-diaminopimelate + succinate. The protein operates within amino-acid biosynthesis; L-lysine biosynthesis via DAP pathway; LL-2,6-diaminopimelate from (S)-tetrahydrodipicolinate (succinylase route): step 3/3. In terms of biological role, catalyzes the hydrolysis of N-succinyl-L,L-diaminopimelic acid (SDAP), forming succinate and LL-2,6-diaminopimelate (DAP), an intermediate involved in the bacterial biosynthesis of lysine and meso-diaminopimelic acid, an essential component of bacterial cell walls. The protein is Succinyl-diaminopimelate desuccinylase of Methylobacterium nodulans (strain LMG 21967 / CNCM I-2342 / ORS 2060).